Consider the following 106-residue polypeptide: Iron-sulfur cluster assembly protein CyaY (106 aa).

This sequence belongs to the frataxin family.

Involved in iron-sulfur (Fe-S) cluster assembly. May act as a regulator of Fe-S biogenesis. The sequence is that of Iron-sulfur cluster assembly protein CyaY from Citrobacter koseri (strain ATCC BAA-895 / CDC 4225-83 / SGSC4696).